Reading from the N-terminus, the 126-residue chain is MATFKLVISDTKTGVAKQIEITGAEADKLIGLRIGDEIEAKELGFNLSEIFGSEIPGDVKLKITGGTDKDGFPMRPDVHGPRRVKILISRGPGFRPQERGERRKKTVRGNTISPEIAQINVKIVYP.

Belongs to the eukaryotic ribosomal protein eS6 family.

The sequence is that of Small ribosomal subunit protein eS6 from Thermococcus sibiricus (strain DSM 12597 / MM 739).